The sequence spans 99 residues: DNA-binding protein Fis (99 aa).

The interval 1–25 is disordered; it reads MFEQKISSEALTTTTSIPATGQITQ. Residues 75–94 constitute a DNA-binding region (H-T-H motif); that stretch reads QTRAATMLGINRGTLRKKLK.

The protein belongs to the transcriptional regulatory Fis family. Homodimer.

Activates ribosomal RNA transcription. Plays a direct role in upstream activation of rRNA promoters. The protein is DNA-binding protein Fis of Psychromonas ingrahamii (strain DSM 17664 / CCUG 51855 / 37).